The sequence spans 437 residues: Purple acid phosphatase 21 (437 aa).

The signal sequence occupies residues 1–25; it reads MKKMKIFGFLISFSLFFLSPFVCQA. The N-linked (GlcNAc...) asparagine glycan is linked to Asn-30. The Fe cation site is built by Asp-152, Asp-179, and Tyr-182. Position 179 (Asp-179) interacts with Zn(2+). Positions 212 and 296 each coordinate Zn(2+). Asn-212 is a binding site for substrate. The Proton donor role is filled by His-306. His-333 serves as a coordination point for Zn(2+). Residue 333-335 participates in substrate binding; the sequence is HVH. Fe cation is bound at residue His-335.

This sequence belongs to the metallophosphoesterase superfamily. Purple acid phosphatase family. Homodimer. Fe cation serves as cofactor. The cofactor is Zn(2+). In terms of tissue distribution, expressed flowers and siliques.

The protein localises to the secreted. The catalysed reaction is a phosphate monoester + H2O = an alcohol + phosphate. The polypeptide is Purple acid phosphatase 21 (PAP21) (Arabidopsis thaliana (Mouse-ear cress)).